We begin with the raw amino-acid sequence, 327 residues long: 4-hydroxythreonine-4-phosphate dehydrogenase (327 aa).

2 residues coordinate substrate: H134 and T135. Residues H164, H209, and H264 each contribute to the a divalent metal cation site. The substrate site is built by K272, N281, and R290.

It belongs to the PdxA family. In terms of assembly, homodimer. It depends on Zn(2+) as a cofactor. Requires Mg(2+) as cofactor. The cofactor is Co(2+).

The protein resides in the cytoplasm. The enzyme catalyses 4-(phosphooxy)-L-threonine + NAD(+) = 3-amino-2-oxopropyl phosphate + CO2 + NADH. It functions in the pathway cofactor biosynthesis; pyridoxine 5'-phosphate biosynthesis; pyridoxine 5'-phosphate from D-erythrose 4-phosphate: step 4/5. Functionally, catalyzes the NAD(P)-dependent oxidation of 4-(phosphooxy)-L-threonine (HTP) into 2-amino-3-oxo-4-(phosphooxy)butyric acid which spontaneously decarboxylates to form 3-amino-2-oxopropyl phosphate (AHAP). The sequence is that of 4-hydroxythreonine-4-phosphate dehydrogenase from Shewanella frigidimarina (strain NCIMB 400).